Here is a 310-residue protein sequence, read N- to C-terminus: Deoxypodophyllotoxin synthase (310 aa).

Residues 159–258 (STNYLLHFMR…RLSTSSFSFP (100 aa)) form the Fe2OG dioxygenase domain. The Fe cation site is built by His-184, Asp-186, and His-239. Arg-249 is a 2-oxoglutarate binding site.

The protein belongs to the iron/ascorbate-dependent oxidoreductase family. Fe(2+) is required as a cofactor. Mostly expressed in leaves and stems.

It carries out the reaction (-)-yatein + 2-oxoglutarate + O2 = (-)-deoxypodophyllotoxin + succinate + CO2 + H2O. The protein operates within aromatic compound metabolism; phenylpropanoid biosynthesis. 2-oxoglutarate-dependent dioxygenase involved in the biosynthesis of etoposide, a chemotherapeutic compound of the topoisomerase inhibitor family. Catalyzes the conversion of yatein to deoxypodophyllotoxin. Can also use, to some extent, demethylyatein as substrate. In Sinopodophyllum hexandrum (Himalayan may apple), this protein is Deoxypodophyllotoxin synthase.